We begin with the raw amino-acid sequence, 99 residues long: uncharacterized protein (99 aa).

The protein localises to the mitochondrion. This is an uncharacterized protein from Marchantia polymorpha (Common liverwort).